Consider the following 35-residue polypeptide: Photosystem II reaction center protein T (35 aa).

The chain crosses the membrane as a helical span at residues 3–23 (ALVYTFLLVSTLGIIFFAIFF).

This sequence belongs to the PsbT family. As to quaternary structure, PSII is composed of 1 copy each of membrane proteins PsbA, PsbB, PsbC, PsbD, PsbE, PsbF, PsbH, PsbI, PsbJ, PsbK, PsbL, PsbM, PsbT, PsbY, PsbZ, Psb30/Ycf12, at least 3 peripheral proteins of the oxygen-evolving complex and a large number of cofactors. It forms dimeric complexes.

The protein localises to the plastid. It is found in the chloroplast thylakoid membrane. In terms of biological role, found at the monomer-monomer interface of the photosystem II (PS II) dimer, plays a role in assembly and dimerization of PSII. PSII is a light-driven water plastoquinone oxidoreductase, using light energy to abstract electrons from H(2)O, generating a proton gradient subsequently used for ATP formation. The polypeptide is Photosystem II reaction center protein T (Metasequoia glyptostroboides (Dawn redwood)).